The primary structure comprises 661 residues: DNA cross-link repair protein PSO2/SNM1 (661 aa).

A disordered region spans residues Met-1 to Thr-44. Positions Leu-31–Arg-43 are enriched in basic residues. The segment at Val-144–Pro-174 adopts a UBZ4-type zinc-finger fold. Zn(2+) contacts are provided by Cys-147, Cys-150, His-165, and Cys-169.

The protein belongs to the DNA repair metallo-beta-lactamase (DRMBL) family.

Its subcellular location is the nucleus. Functionally, required for DNA interstrand cross-link repair. This requires cleavage of cross-linked DNA to generate DNA double strand breaks (DSBs). This protein has 5' exonuclease activity on single-stranded and double-stranded DNA, which appears to be necessary for the processing of DNA double strand breaks prior to ligation. This Saccharomyces cerevisiae (strain ATCC 204508 / S288c) (Baker's yeast) protein is DNA cross-link repair protein PSO2/SNM1 (PSO2).